The sequence spans 1097 residues: DNA-directed RNA polymerase subunit beta (1097 aa).

Residues 1070–1097 (LMQDVNPRRNTPSRPTYESLGTSEYEED) are disordered. The span at 1077-1091 (RRNTPSRPTYESLGT) shows a compositional bias: polar residues.

It belongs to the RNA polymerase beta chain family. As to quaternary structure, in cyanobacteria the RNAP catalytic core is composed of 2 alpha, 1 beta, 1 beta', 1 gamma and 1 omega subunit. When a sigma factor is associated with the core the holoenzyme is formed, which can initiate transcription.

The enzyme catalyses RNA(n) + a ribonucleoside 5'-triphosphate = RNA(n+1) + diphosphate. DNA-dependent RNA polymerase catalyzes the transcription of DNA into RNA using the four ribonucleoside triphosphates as substrates. The sequence is that of DNA-directed RNA polymerase subunit beta from Prochlorococcus marinus (strain MIT 9515).